A 327-amino-acid polypeptide reads, in one-letter code: MQNSASEFLKPRLIDVQPVSATQARVAMEPFERGYAYTLGNALRRILLSSMPGFAPTEVSIAGVLHEYSALDGVREDVVDILLNLKGVVFKLHGRDSVLLTLKKEGEGAVRASDIDLPHDVEVVNPDHVICHLAAGGKIDMEIKVEKGRGYQPAPARVKQDDNRQIGTILLDASFSPLRRVSFSVESARVEQRTDLDRLVMDIETNGVIEPEEAVRSAARILIDQLSIFADLQGTTVEVVEERAPQVDPILLRPVDDLELTVRSANCLKAENIYYIGDLIQRTETELLKTPNLGRKSLNEIKEVLASKGLTLGMKLENWPPAGLEKP.

The interval 1–233 is alpha N-terminal domain (alpha-NTD); the sequence is MQNSASEFLK…DQLSIFADLQ (233 aa). The tract at residues 247–327 is alpha C-terminal domain (alpha-CTD); it reads VDPILLRPVD…NWPPAGLEKP (81 aa).

This sequence belongs to the RNA polymerase alpha chain family. Homodimer. The RNAP catalytic core consists of 2 alpha, 1 beta, 1 beta' and 1 omega subunit. When a sigma factor is associated with the core the holoenzyme is formed, which can initiate transcription.

The enzyme catalyses RNA(n) + a ribonucleoside 5'-triphosphate = RNA(n+1) + diphosphate. Functionally, DNA-dependent RNA polymerase catalyzes the transcription of DNA into RNA using the four ribonucleoside triphosphates as substrates. This Laribacter hongkongensis (strain HLHK9) protein is DNA-directed RNA polymerase subunit alpha.